The sequence spans 460 residues: Chromosomal replication initiator protein DnaA (460 aa).

The tract at residues 1–84 is domain I, interacts with DnaA modulators; sequence MAVSLWQQCI…RFDIGSRPSA (84 aa). Residues 84 to 123 form a domain II region; that stretch reads AKKPEPAPVAAVRVPNPQTKASVGTSFNTTEPVVNANHRS. The tract at residues 124–340 is domain III, AAA+ region; it reads NINPTYQFDN…GALNRVIANA (217 aa). Residues Gly-168, Gly-170, Lys-171, and Thr-172 each contribute to the ATP site. The domain IV, binds dsDNA stretch occupies residues 341-460; that stretch reads NFTGRPITID…YANLIRTLSS (120 aa).

This sequence belongs to the DnaA family. Oligomerizes as a right-handed, spiral filament on DNA at oriC.

The protein localises to the cytoplasm. Its function is as follows. Plays an essential role in the initiation and regulation of chromosomal replication. ATP-DnaA binds to the origin of replication (oriC) to initiate formation of the DNA replication initiation complex once per cell cycle. Binds the DnaA box (a 9 base pair repeat at the origin) and separates the double-stranded (ds)DNA. Forms a right-handed helical filament on oriC DNA; dsDNA binds to the exterior of the filament while single-stranded (ss)DNA is stabiized in the filament's interior. The ATP-DnaA-oriC complex binds and stabilizes one strand of the AT-rich DNA unwinding element (DUE), permitting loading of DNA polymerase. After initiation quickly degrades to an ADP-DnaA complex that is not apt for DNA replication. Binds acidic phospholipids. This is Chromosomal replication initiator protein DnaA from Shewanella sp. (strain MR-7).